The sequence spans 204 residues: Small heat shock protein, chloroplastic (204 aa).

The interval 34 to 55 is disordered; it reads QMGRVDHDHELDDRSNRAPISR. Over residues 37–49 the composition is skewed to basic and acidic residues; the sequence is RVDHDHELDDRSN. The 107-residue stretch at 98-204 folds into the sHSP domain; sequence GSGRAMRRGW…KKDVFQVMVD (107 aa).

This sequence belongs to the small heat shock protein (HSP20) family.

It is found in the plastid. Its subcellular location is the chloroplast stroma. The protein is Small heat shock protein, chloroplastic (HSP23) of Oxybasis rubra (Red goosefoot).